Reading from the N-terminus, the 146-residue chain is MAFWQSKTLTEMTSQEWESLCDGCGKCCLNKLIDDETEELYYTNAACLLLDHQTTSCQHYSDRFRYVPQCTVITAQNVHELTWLPDSCAYRRLAAGRALPSWHPLLTGSKDAMHLAGMSIQGKVVDERRVKDIEDHIVLWPLKDLD.

Belongs to the UPF0260 family.

In Shewanella oneidensis (strain ATCC 700550 / JCM 31522 / CIP 106686 / LMG 19005 / NCIMB 14063 / MR-1), this protein is UPF0260 protein SO_2573.